Here is a 336-residue protein sequence, read N- to C-terminus: MNNIQLAHGSGGQAMQQLINSLFMEAFANPWLAEQEDQARLDLAQLVAEGDRLAFSTDSYVIDPLFFPGGNIGKLAICGTANDVAVSGAIPRYLSCGFILEEGLPMETLKAVVTSMAETARAAGIAIVTGDTKVVQRGAVDKLFINTAGMGAIPANIHWGAQTLTAGDVLLVSGTLGDHGATILNLREQLGLDGELVSDCAVLTPLIQTLRDIPGVKALRDATRGGVNAVVHEFAAACGCGIELSEAALPVKPAVRGVCELLGLDALNFANEGKLVIAVERNAAEQVLAALHSHPLGKDAALIGEVVERKGVRLAGLYGVKRTLDLPHAEPLPRIC.

C336 bears the S-carbamoylcysteine; by HypF; alternate mark. C336 carries the post-translational modification S-cyanocysteine; by autocatalysis; alternate.

The protein belongs to the HypE family. Homodimer. Forms a complex with HypF. Also forms a complex with HypC, or HybG, and HypD. Post-translationally, modified by HypF, which adds a carboxamido group to the thiolate of the C-terminal cysteine, yielding a protein-S-carboxamide. The carboxamido group is then dehydrated by HypE itself to yield a protein-thiocyanate.

It catalyses the reaction C-terminal S-carboxamide-L-cysteinyl-[HypE protein] + ATP = C-terminal S-cyanate-L-cysteinyl-[HypE protein] + ADP + phosphate + H(+). Its pathway is protein modification; [NiFe] hydrogenase maturation. In terms of biological role, involved in the maturation of [NiFe] hydrogenases. Along with HypF, it catalyzes the synthesis of the CN ligands of the active site iron of [NiFe]-hydrogenases. HypE catalyzes the ATP-dependent dehydration of the carboxamido group attached to its C-terminal cysteine to a cyano group. The cyano group is then transferred from HypE to the HypC-HypD complex or the HybG-HypD complex. This Escherichia coli (strain K12) protein is Carbamoyl dehydratase HypE.